A 65-amino-acid chain; its full sequence is Large ribosomal subunit protein bL35 (65 aa).

This sequence belongs to the bacterial ribosomal protein bL35 family.

The chain is Large ribosomal subunit protein bL35 from Paraburkholderia xenovorans (strain LB400).